The following is a 328-amino-acid chain: Stress response kinase A (328 aa).

Asp-201 acts as the Proton acceptor in catalysis. Mg(2+) contacts are provided by Asn-206 and Asp-217. Residue Asp-217 is part of the active site.

This sequence belongs to the SrkA/RdoA protein kinase family. Monomer. The cofactor is Mg(2+).

The protein localises to the cytoplasm. It catalyses the reaction L-seryl-[protein] + ATP = O-phospho-L-seryl-[protein] + ADP + H(+). It carries out the reaction L-threonyl-[protein] + ATP = O-phospho-L-threonyl-[protein] + ADP + H(+). In terms of biological role, a protein kinase that phosphorylates Ser and Thr residues. Probably acts to suppress the effects of stress linked to accumulation of reactive oxygen species. Probably involved in the extracytoplasmic stress response. Also has a role in LPS synthesis, through regulation of the galETK expression. Functionally, a protein kinase that phosphorylates Ser and Thr residues. Probably acts to suppress the effects of stress linked to accumulation of reactive oxygen species. Probably involved in the extracytoplasmic stress response. The polypeptide is Stress response kinase A (Shigella flexneri).